The sequence spans 459 residues: Sperm microtubule associated protein 2-like (459 aa).

The tract at residues 1 to 138 is disordered; the sequence is MEEGDFSGSS…QEDGKDDLFP (138 aa). The span at 21–30 shows a compositional bias: low complexity; it reads TTTTTETRTT. A compositionally biased stretch (acidic residues) spans 47-63; it reads NGDEAEAVGEEGQEEDY. The span at 64–73 shows a compositional bias: basic and acidic residues; it reads EGSKTHKSHE. The span at 77-87 shows a compositional bias: polar residues; sequence SFRSHNSSDPP. Composition is skewed to basic and acidic residues over residues 91 to 112 and 127 to 136; these read KASD…KTSD and ERQEDGKDDL. THEG repeat units lie at residues 172–190, 212–231, 258–277, 291–310, 327–346, 367–386, 403–422, and 440–459; these read KKCF…PKKQ, AALK…PRLV, PALV…PNKF, TTRY…AKGT, STLS…PRIK, AALL…SKRV, AATH…PHTR, and SALK…PIVR.

The polypeptide is Sperm microtubule associated protein 2-like (Mus musculus (Mouse)).